The following is a 232-amino-acid chain: Orotate phosphoribosyltransferase (232 aa).

Residues Arg-107, Lys-108, Lys-111, His-113, and 133-141 (EDLTTAGGS) each bind 5-phospho-alpha-D-ribose 1-diphosphate. An orotate-binding site is contributed by Thr-137.

The protein belongs to the purine/pyrimidine phosphoribosyltransferase family. PyrE subfamily. As to quaternary structure, homodimer. Mg(2+) is required as a cofactor.

The catalysed reaction is orotidine 5'-phosphate + diphosphate = orotate + 5-phospho-alpha-D-ribose 1-diphosphate. It functions in the pathway pyrimidine metabolism; UMP biosynthesis via de novo pathway; UMP from orotate: step 1/2. Its function is as follows. Catalyzes the transfer of a ribosyl phosphate group from 5-phosphoribose 1-diphosphate to orotate, leading to the formation of orotidine monophosphate (OMP). The polypeptide is Orotate phosphoribosyltransferase (Sinorhizobium medicae (strain WSM419) (Ensifer medicae)).